The chain runs to 228 residues: UPF0173 metal-dependent hydrolase Tpen_1493 (228 aa).

The protein belongs to the UPF0173 family.

This Thermofilum pendens (strain DSM 2475 / Hrk 5) protein is UPF0173 metal-dependent hydrolase Tpen_1493.